The primary structure comprises 539 residues: MSKRVGIIGAGVSGLAAIWCCLEEGLEPTCFERSDDVGGLWKFSDHTEEGRASIYQSVFTNSSKEMMCFPDFPYPDDYPNYIHHSKLQEYIKTYAQKKDLLRYIQFETLVSGIKKCPSFLVTGQWVVVTEKDGKQESTIFDAVMICSGHHVYPNLPTDSFPGLDQFRGNYLHSRDYKNPEAFKGKRVLVIGLGNSGSDIAVELSRLATQVIISTRSASWVMSRVWDDGYPWDMMYVTRFASFLRNVLPSFISDWLYVQKMNTWFKHENYGLMPLNGSLRKEPVFNDELPSRILCGTLSIKPSVKEFTETSAVFEDGTMFEAIDSVIFATGYDYSYPFLDETIMKSRNNEVTLFKGIFPPLMEKPTLAVIGLVQSLGAAIPTADLQAWWAAKVFANSCTLPTTNEMMDDTDEKMGKKLKCMFSSFFMFGQSQTLQTDYITYVDELGSFIGAKPNIPWLFLTDPRLALEVYFGPCSPYQFRLMGPGKWDGARNAILTQWNRTVKPTRTRVVSEVQRPHPFYNLLKMLSFPLLLLAVTLTFY.

Residues 9–13 (GAGVS), Glu32, 40–41 (LW), and 61–62 (NS) each bind FAD. 195 to 198 (SGSD) contributes to the NADP(+) binding site. Residues 518–538 (FYNLLKMLSFPLLLLAVTLTF) traverse the membrane as a helical segment.

It belongs to the FMO family. Requires FAD as cofactor.

Its subcellular location is the microsome membrane. The protein resides in the endoplasmic reticulum membrane. It catalyses the reaction N,N-dimethylaniline + NADPH + O2 + H(+) = N,N-dimethylaniline N-oxide + NADP(+) + H2O. Its function is as follows. It is probable that this protein is only produced in very small quantity or not at all as the gene coding for it seems to be unable to produce full-length transcripts. This is Putative dimethylaniline monooxygenase [N-oxide-forming] 6 (FMO6P) from Homo sapiens (Human).